The following is a 365-amino-acid chain: Putrescine 2-hydroxylase (365 aa).

A Rieske domain is found at 44–141 (GHELMVPEVG…LQNWNGLLFE (98 aa)). Cys81, His83, Cys100, and His103 together coordinate [2Fe-2S] cluster.

Belongs to the bacterial ring-hydroxylating dioxygenase alpha subunit family. Requires [2Fe-2S] cluster as cofactor.

Functionally, rieske-type iron sulfur protein that can catalyze in vitro the 2-hydroxylation of putrescine, forming 2-hydroxyputrescine. May be involved in the biosynthesis of the cyclic hydroxamate siderophore alcaligin. The polypeptide is Putrescine 2-hydroxylase (Ralstonia nicotianae (strain ATCC BAA-1114 / GMI1000) (Ralstonia solanacearum)).